A 217-amino-acid chain; its full sequence is Octanoyltransferase (217 aa).

Positions Ser-33 to Ser-208 constitute a BPL/LPL catalytic domain. Residues Arg-72 to His-79, Ser-139 to Gly-141, and Gly-152 to Ala-154 contribute to the substrate site. Residue Cys-170 is the Acyl-thioester intermediate of the active site.

This sequence belongs to the LipB family.

It localises to the cytoplasm. It carries out the reaction octanoyl-[ACP] + L-lysyl-[protein] = N(6)-octanoyl-L-lysyl-[protein] + holo-[ACP] + H(+). It functions in the pathway protein modification; protein lipoylation via endogenous pathway; protein N(6)-(lipoyl)lysine from octanoyl-[acyl-carrier-protein]: step 1/2. Functionally, catalyzes the transfer of endogenously produced octanoic acid from octanoyl-acyl-carrier-protein onto the lipoyl domains of lipoate-dependent enzymes. Lipoyl-ACP can also act as a substrate although octanoyl-ACP is likely to be the physiological substrate. This chain is Octanoyltransferase, found in Pseudoalteromonas atlantica (strain T6c / ATCC BAA-1087).